The sequence spans 129 residues: uncharacterized protein (129 aa).

A disordered region spans residues 52–94 (NGDEESQDDWLNDLLKSDGDGGKAGPVDPSHPMETTTTDHSSQ). Positions 53-62 (GDEESQDDWL) are enriched in acidic residues. Over residues 84-94 (METTTTDHSSQ) the composition is skewed to polar residues.

This is an uncharacterized protein from Caenorhabditis elegans.